We begin with the raw amino-acid sequence, 107 residues long: Hydrogenase expression/formation protein HoxL (107 aa).

The protein belongs to the HupF/HypC family.

The protein is Hydrogenase expression/formation protein HoxL (hoxL) of Cupriavidus necator (strain ATCC 17699 / DSM 428 / KCTC 22496 / NCIMB 10442 / H16 / Stanier 337) (Ralstonia eutropha).